Consider the following 1197-residue polypeptide: ATP-dependent helicase/nuclease subunit A (1197 aa).

Residues 2 to 458 (KNWTTEQQAA…IDLAKNFRSR (457 aa)) form the UvrD-like helicase ATP-binding domain. 23-30 (AAAGSGKT) contributes to the ATP binding site. In terms of domain architecture, UvrD-like helicase C-terminal spans 485 to 774 (RAALYQGASF…RIMSIHKSKG (290 aa)).

Belongs to the helicase family. AddA subfamily. As to quaternary structure, heterodimer of AddA and AddB/RexB. It depends on Mg(2+) as a cofactor.

It catalyses the reaction Couples ATP hydrolysis with the unwinding of duplex DNA by translocating in the 3'-5' direction.. The catalysed reaction is ATP + H2O = ADP + phosphate + H(+). In terms of biological role, the heterodimer acts as both an ATP-dependent DNA helicase and an ATP-dependent, dual-direction single-stranded exonuclease. Recognizes the chi site generating a DNA molecule suitable for the initiation of homologous recombination. The AddA nuclease domain is required for chi fragment generation; this subunit has the helicase and 3' -&gt; 5' nuclease activities. The chain is ATP-dependent helicase/nuclease subunit A from Alkaliphilus metalliredigens (strain QYMF).